Consider the following 159-residue polypeptide: Cytochrome c-type biogenesis protein CcmE (159 aa).

Topologically, residues 1-8 are cytoplasmic; that stretch reads MNLRRKNR. The helical; Signal-anchor for type II membrane protein transmembrane segment at 9-29 threads the bilayer; that stretch reads LWVVCAVLAGLGLTTALVLYA. Residues 30 to 159 lie on the Periplasmic side of the membrane; sequence LRANIDLFYT…PQRADKDTSS (130 aa). Positions 129–159 are disordered; it reads KHDENYTPPEVEKAMQENHRRPQRADKDTSS. Residues His130 and Tyr134 each coordinate heme.

It belongs to the CcmE/CycJ family.

It localises to the cell inner membrane. Its function is as follows. Heme chaperone required for the biogenesis of c-type cytochromes. Transiently binds heme delivered by CcmC and transfers the heme to apo-cytochromes in a process facilitated by CcmF and CcmH. In Salmonella typhimurium (strain LT2 / SGSC1412 / ATCC 700720), this protein is Cytochrome c-type biogenesis protein CcmE.